Consider the following 477-residue polypeptide: MAAPILRSFSWGRWSGTLNLSVLLPLGLRKAHSGAQGLLAAQKARGLFKDFFPETGTKIELPELFDRGTASFPQTIYCGFDPTADSLHVGHLLALLGLFHLQRAGHNVIALVGGATARLGDPSGRTKEREALETERVRANARALRLGLEALAANHQQLFTDGRSWGSFTVLDNSAWYQKQHLVDFLAAVGGHFRMGTLLSRQSVQLRLKSPEGMSLAEFFYQVLQAYDFYYLFQRYGCRVQLGGSDQLGNIMSGYEFINKLTGEDVFGITVPLITSTTGAKLGKSAGNAVWLNRDKTSPFELYQFFVRQPDDSVERYLKLFTFLPLPEIDHIMQLHVKEPERRGPQKRLAAEVTKLVHGREGLDSAKRCTQALYHSSIDALEVMSDQELKELFKEAPFSEFFLDPGTSVLDTCRKANAIPDGPRGYRMITEGGVSINHQQVTNPESVLIVGQHILKNGLSLLKIGKRNFYIIKWLQL.

Residues 1–16 (MAAPILRSFSWGRWSG) constitute a mitochondrion transit peptide. Position 77 (Tyr77) interacts with L-tyrosine. Asp81 serves as a coordination point for ATP. The 'HIGH' region signature appears at 82–91 (PTADSLHVGH). L-tyrosine-binding residues include Asp121, Tyr221, Gln225, and Asp228. ATP is bound at residue 244-246 (GSD). Gln247 is a binding site for L-tyrosine. Positions 274 and 284 each coordinate ATP. Residues 281–285 (KLGKS) carry the 'KMSKS' region motif. Residues Lys355 and Lys367 each carry the N6-acetyllysine modification.

It belongs to the class-I aminoacyl-tRNA synthetase family. As to quaternary structure, homodimer.

Its subcellular location is the mitochondrion matrix. It carries out the reaction tRNA(Tyr) + L-tyrosine + ATP = L-tyrosyl-tRNA(Tyr) + AMP + diphosphate + H(+). Catalyzes the attachment of tyrosine to tRNA(Tyr) in a two-step reaction: tyrosine is first activated by ATP to form Tyr-AMP and then transferred to the acceptor end of tRNA(Tyr). The chain is Tyrosine--tRNA ligase, mitochondrial (YARS2) from Homo sapiens (Human).